We begin with the raw amino-acid sequence, 356 residues long: DNA polymerase IV (356 aa).

The UmuC domain maps to 6-187 (IIHIDMDYFF…LDIGDFPGVG (182 aa)). Positions 10 and 105 each coordinate Mg(2+). The active site involves Glu106.

Belongs to the DNA polymerase type-Y family. Monomer. It depends on Mg(2+) as a cofactor.

The protein resides in the cytoplasm. The catalysed reaction is DNA(n) + a 2'-deoxyribonucleoside 5'-triphosphate = DNA(n+1) + diphosphate. Functionally, poorly processive, error-prone DNA polymerase involved in untargeted mutagenesis. Copies undamaged DNA at stalled replication forks, which arise in vivo from mismatched or misaligned primer ends. These misaligned primers can be extended by PolIV. Exhibits no 3'-5' exonuclease (proofreading) activity. May be involved in translesional synthesis, in conjunction with the beta clamp from PolIII. The protein is DNA polymerase IV of Staphylococcus epidermidis (strain ATCC 35984 / DSM 28319 / BCRC 17069 / CCUG 31568 / BM 3577 / RP62A).